A 287-amino-acid chain; its full sequence is uncharacterized protein (287 aa).

Disordered stretches follow at residues Gln-109 to Asp-175, Ile-203 to Val-223, and Lys-257 to Glu-287. Over residues Glu-110–Pro-136 the composition is skewed to low complexity. Basic and acidic residues predominate over residues Arg-143 to Lys-152. The span at Glu-153–Asn-162 shows a compositional bias: basic residues. Basic and acidic residues predominate over residues Ser-273–Glu-287.

It belongs to the chlamydial CPn_0623/CT_504/TC_0791 family.

This is an uncharacterized protein from Chlamydia muridarum (strain MoPn / Nigg).